Consider the following 375-residue polypeptide: Trichodiene synthase (375 aa).

The protein belongs to the trichodiene synthase family.

It catalyses the reaction (2E,6E)-farnesyl diphosphate = trichodiene + diphosphate. It participates in sesquiterpene biosynthesis; trichothecene biosynthesis. Functionally, TS is a member of the terpene cyclase group of enzymes. It catalyzes the isomerization and cyclization of farnesyl pyro-phosphate to form trichodiene, the first cyclic intermediate in the biosynthetic pathway for trichothecenes. It serves to branch trichothecene biosynthesis from the isoprenoid pathway. The chain is Trichodiene synthase (TRI5) from Fusarium cerealis (Fusarium crookwellense).